Reading from the N-terminus, the 471-residue chain is Secretogranin-3 (471 aa).

The signal sequence occupies residues 1 to 22 (MGFLWTGTWIVVLMLHSSPIQA). 2 disordered regions span residues 23 to 72 (FPKP…ESNY) and 86 to 105 (EKEKNEKERQSVKISPNDNK). Positions 32–45 (KPLHNRELSAERPL) are enriched in basic and acidic residues. Phosphoserine is present on serine 40. Serine 40 is a glycosylation site (O-linked (Xyl...) (chondroitin sulfate) serine). Residue asparagine 71 is glycosylated (N-linked (GlcNAc...) asparagine). Residues 86–96 (EKEKNEKERQS) show a composition bias toward basic and acidic residues. An N-linked (GlcNAc...) asparagine glycan is attached at asparagine 353. A disordered region spans residues 357 to 409 (LFAVPSEKSHEETDSTKEEAAKMEKEYGTLKDSTKDDDSNPRGKTDEHKGKTE). The segment covering 363–409 (EKSHEETDSTKEEAAKMEKEYGTLKDSTKDDDSNPRGKTDEHKGKTE) has biased composition (basic and acidic residues). Serine 365 carries the phosphoserine modification.

In terms of assembly, interacts with CHGA. Interacts with secretogranin II/SCG2. Interacts (via C-terminus) with CPE.

It is found in the cytoplasmic vesicle. The protein resides in the secretory vesicle. It localises to the secretory vesicle membrane. The protein localises to the secreted. In terms of biological role, member of the granin protein family that regulates the biogenesis of secretory granules. Acts as a sorting receptor for intragranular proteins including chromogranin A/CHGA. May also play a role in angiogenesis. Promotes endothelial proliferation, migration and tube formation through MEK/ERK signaling pathway. This chain is Secretogranin-3 (SCG3), found in Bos taurus (Bovine).